We begin with the raw amino-acid sequence, 292 residues long: Acetylglutamate kinase (292 aa).

Residues 62–63 (GG), arginine 84, and asparagine 188 contribute to the substrate site.

Belongs to the acetylglutamate kinase family. ArgB subfamily.

Its subcellular location is the cytoplasm. The catalysed reaction is N-acetyl-L-glutamate + ATP = N-acetyl-L-glutamyl 5-phosphate + ADP. It functions in the pathway amino-acid biosynthesis; L-arginine biosynthesis; N(2)-acetyl-L-ornithine from L-glutamate: step 2/4. Its function is as follows. Catalyzes the ATP-dependent phosphorylation of N-acetyl-L-glutamate. In Methanosarcina mazei (strain ATCC BAA-159 / DSM 3647 / Goe1 / Go1 / JCM 11833 / OCM 88) (Methanosarcina frisia), this protein is Acetylglutamate kinase.